Reading from the N-terminus, the 1162-residue chain is Leptin receptor (1162 aa).

The first 21 residues, 1–21, serve as a signal peptide directing secretion; sequence MMCQKFYVVLLHWEFLYVIAA. Residues 22–839 are Extracellular-facing; that stretch reads LNLAYPISPW…AIDKQQNDAG (818 aa). Disulfide bonds link C37/C90, C89/C99, C131/C142, C186/C195, and C188/C193. Residues N41, N56, N73, and N98 are each glycosylated (N-linked (GlcNAc...) asparagine). N-linked (GlcNAc...) asparagine glycosylation is present at N187. Residues 238–331 enclose the Fibronectin type-III 1 domain; it reads PPLGLHMEVT…SPQVFTTQDV (94 aa). N-linked (GlcNAc...) asparagine glycans are attached at residues N275 and N345. In terms of domain architecture, Ig-like spans 329–427; that stretch reads QDVVYFPPKI…HRYAELYVID (99 aa). Cystine bridges form between C350-C410 and C411-C416. A glycan (N-linked (GlcNAc...) asparagine) is linked at N431. 3 cysteine pairs are disulfide-bonded: C434-C445, C471-C526, and C486-C496. Positions 465–482 are leptin-binding; it reads HRRSLYCPDSPSIHPTSE. N-linked (GlcNAc...) asparagine glycosylation is found at N514, N622, N657, N668, N686, N695, N698, and N726. Fibronectin type-III domains lie at 537 to 632, 637 to 729, and 738 to 832; these read PPSN…TLVM, PMRG…NLTF, and AVES…DAID. Positions 620–624 match the WSXWS motif motif; it reads WSNWS. A helical membrane pass occupies residues 840–860; the sequence is LYVIVPIIISSCVLLLGTLLI. The Cytoplasmic segment spans residues 861 to 1162; that stretch reads SHQRMKKLFW…MENKMCDLTV (302 aa). The short motif at 869–877 is the Box 1 motif element; sequence FWDDVPNPK. S880 carries the phosphoserine modification. The segment at 891-896 is required for JAK2 activation; sequence ETFEHL. The interval 896-904 is required for STAT3 phosphorylation; that stretch reads LFTKHAESV. A Phosphotyrosine; by JAK2 modification is found at Y985. Residue Y1077 is modified to Phosphotyrosine. Position 1138 is a phosphotyrosine; by JAK2 (Y1138).

It belongs to the type I cytokine receptor family. Type 2 subfamily. As to quaternary structure, present as a mixture of monomers and dimers. The phosphorylated receptor binds a number of SH2 domain-containing proteins such as JAK2, STAT3, PTPN11, and SOCS3. Interaction with SOCS3 inhibits JAK/STAT signaling and MAPK cascade. Post-translationally, on ligand binding, phosphorylated on two conserved C-terminal tyrosine residues (isoform B only) by JAK2. Tyr-985 is required for complete binding and activation of PTPN11, ERK/FOS activation,for interaction with SOCS3 and SOCS3 mediated inhibition of leptin signaling. Phosphorylation on Tyr-1138 is required for STAT3 binding/activation. Phosphorylation of Tyr-1077 has a more accessory role. As to expression, isoform A: highest level of expression in lung and kidney, also present in heart, brain, spleen, liver, muscle, choroid plexus and hypothalamus. Isoform B: highest levels of expression in hypothalamus and lower levels in brain, testes and adipose tissue. Expressed by neurons of the parabrachial nucleus. Expressed by peripheral blood mononuclear cells and CD4(+) T-cells. Isoform E: expressed in adipose tissue, liver, hypothalamus, cerebral microvessels, heart, and testes.

It localises to the cell membrane. The protein localises to the basolateral cell membrane. Its subcellular location is the secreted. In terms of biological role, receptor for hormone LEP/leptin. On ligand binding, mediates LEP central and peripheral effects through the activation of different signaling pathways such as JAK2/STAT3 and MAPK cascade/FOS. In the hypothalamus, LEP acts as an appetite-regulating factor that induces a decrease in food intake and an increase in energy consumption by inducing anorexinogenic factors and suppressing orexigenic neuropeptides, also regulates bone mass and secretion of hypothalamo-pituitary-adrenal hormones. In the periphery, increases basal metabolism, influences reproductive function, regulates pancreatic beta-cell function and insulin secretion, is pro-angiogenic and affects innate and adaptive immunity. Control of energy homeostasis and melanocortin production (stimulation of POMC and full repression of AgRP transcription) is mediated by STAT3 signaling, whereas distinct signals regulate NPY and the control of fertility, growth and glucose homeostasis. Involved in the regulation of counter-regulatory response to hypoglycemia by inhibiting neurons of the parabrachial nucleus. Has a specific effect on T lymphocyte responses, differentially regulating the proliferation of naive and memory T-cells. Leptin increases Th1 and suppresses Th2 cytokine production. Functionally, may transport LEP across the blood-brain barrier. Binds LEP and mediates LEP endocytosis. Does not induce phosphorylation of and activate STAT3. Its function is as follows. Antagonizes Isoform A and isoform B-mediated LEP binding and endocytosis. The protein is Leptin receptor (Lepr) of Mus musculus (Mouse).